The following is a 360-amino-acid chain: Phospho-N-acetylmuramoyl-pentapeptide-transferase (360 aa).

10 helical membrane passes run 27-47 (GAFMTALIFGFLFGRPLINVL), 71-91 (TPTMGGLLIVGALLTSTLLWA), 93-113 (WDNPFVWMVLFVTLAYALIGF), 134-154 (LALGVIIAVIAALWASYNHPA), 168-188 (TLINLGLLYVPFAICVIVGSA), 199-219 (GLAIMPAMIAASTLGVIAYAV), 239-259 (ILIFTAALFGAGLGFLWYNAP), 262-282 (AVFMGDTGSLALGGALGAIAV), 288-308 (LVLAIVGGLFVVEALSVIIQV), and 337-357 (TIVIRFWIISLILAMIGLATL).

The protein belongs to the glycosyltransferase 4 family. MraY subfamily. It depends on Mg(2+) as a cofactor.

Its subcellular location is the cell inner membrane. The enzyme catalyses UDP-N-acetyl-alpha-D-muramoyl-L-alanyl-gamma-D-glutamyl-meso-2,6-diaminopimeloyl-D-alanyl-D-alanine + di-trans,octa-cis-undecaprenyl phosphate = di-trans,octa-cis-undecaprenyl diphospho-N-acetyl-alpha-D-muramoyl-L-alanyl-D-glutamyl-meso-2,6-diaminopimeloyl-D-alanyl-D-alanine + UMP. It functions in the pathway cell wall biogenesis; peptidoglycan biosynthesis. Its function is as follows. Catalyzes the initial step of the lipid cycle reactions in the biosynthesis of the cell wall peptidoglycan: transfers peptidoglycan precursor phospho-MurNAc-pentapeptide from UDP-MurNAc-pentapeptide onto the lipid carrier undecaprenyl phosphate, yielding undecaprenyl-pyrophosphoryl-MurNAc-pentapeptide, known as lipid I. The polypeptide is Phospho-N-acetylmuramoyl-pentapeptide-transferase (Ruegeria pomeroyi (strain ATCC 700808 / DSM 15171 / DSS-3) (Silicibacter pomeroyi)).